The sequence spans 262 residues: MNKSLLSELIIDIGNTSIAFALFEDNKVNLFIKMKTNLMLSYDEVYSFFKENFDFNVNQVFISSVVPVLNKIFENIIFSFFKIKPLFISFDLNYDLTFNPYGSGKFLLGSDVFANLVAAIENYSLENVLVADLGTACTIFAVSRQDGILGGLINSGPLINFNSLLDNAYLLNKFPISTPTNLLERTTSGSVNSGLFYQYKYLIEGVYHDIKKIYKRGFNLIITGGNANLLLPLIEVEFIFNIHLTVEGIRILGNSIVVKFVN.

ATP is bound at residue 12 to 19 (DIGNTSIA). Substrate is bound by residues Tyr94 and 109 to 112 (GSDV). Catalysis depends on Asp111, which acts as the Proton acceptor. Position 132 (Asp132) interacts with K(+). An ATP-binding site is contributed by Thr135. Substrate is bound at residue Thr187.

It belongs to the type III pantothenate kinase family. Homodimer. Requires NH4(+) as cofactor. It depends on K(+) as a cofactor.

Its subcellular location is the cytoplasm. It catalyses the reaction (R)-pantothenate + ATP = (R)-4'-phosphopantothenate + ADP + H(+). It participates in cofactor biosynthesis; coenzyme A biosynthesis; CoA from (R)-pantothenate: step 1/5. Catalyzes the phosphorylation of pantothenate (Pan), the first step in CoA biosynthesis. In Borrelia garinii subsp. bavariensis (strain ATCC BAA-2496 / DSM 23469 / PBi) (Borreliella bavariensis), this protein is Type III pantothenate kinase.